Consider the following 393-residue polypeptide: S-adenosylmethionine synthase 2 (393 aa).

Glutamate 9 is a Mg(2+) binding site. Residue histidine 15 participates in ATP binding. Residue glutamate 43 coordinates K(+). Residues glutamate 56 and glutamine 99 each contribute to the L-methionine site. Residues 167–169 (DGK), 235–238 (SGRF), aspartate 246, 252–253 (RK), alanine 269, lysine 273, and lysine 277 each bind ATP. An L-methionine-binding site is contributed by aspartate 246. Residue lysine 277 coordinates L-methionine.

This sequence belongs to the AdoMet synthase family. Homotetramer. The cofactor is Mn(2+). Requires Mg(2+) as cofactor. Co(2+) is required as a cofactor. K(+) serves as cofactor.

It is found in the cytoplasm. It carries out the reaction L-methionine + ATP + H2O = S-adenosyl-L-methionine + phosphate + diphosphate. It functions in the pathway amino-acid biosynthesis; S-adenosyl-L-methionine biosynthesis; S-adenosyl-L-methionine from L-methionine: step 1/1. Its function is as follows. Catalyzes the formation of S-adenosylmethionine from methionine and ATP. The reaction comprises two steps that are both catalyzed by the same enzyme: formation of S-adenosylmethionine (AdoMet) and triphosphate, and subsequent hydrolysis of the triphosphate. This Populus trichocarpa (Western balsam poplar) protein is S-adenosylmethionine synthase 2 (METK2).